Here is a 368-residue protein sequence, read N- to C-terminus: Probable dual-specificity RNA methyltransferase RlmN (368 aa).

E100 serves as the catalytic Proton acceptor. A Radical SAM core domain is found at 106-344 (QHYGLSVCVT…CVVRQEHGTD (239 aa)). The cysteines at positions 113 and 349 are disulfide-linked. Residues C120, C124, and C127 each contribute to the [4Fe-4S] cluster site. Residues 172–173 (GE), S204, 227–229 (SLH), and N305 contribute to the S-adenosyl-L-methionine site. The active-site S-methylcysteine intermediate is C349.

It belongs to the radical SAM superfamily. RlmN family. [4Fe-4S] cluster is required as a cofactor.

Its subcellular location is the cytoplasm. It catalyses the reaction adenosine(2503) in 23S rRNA + 2 reduced [2Fe-2S]-[ferredoxin] + 2 S-adenosyl-L-methionine = 2-methyladenosine(2503) in 23S rRNA + 5'-deoxyadenosine + L-methionine + 2 oxidized [2Fe-2S]-[ferredoxin] + S-adenosyl-L-homocysteine. The enzyme catalyses adenosine(37) in tRNA + 2 reduced [2Fe-2S]-[ferredoxin] + 2 S-adenosyl-L-methionine = 2-methyladenosine(37) in tRNA + 5'-deoxyadenosine + L-methionine + 2 oxidized [2Fe-2S]-[ferredoxin] + S-adenosyl-L-homocysteine. Functionally, specifically methylates position 2 of adenine 2503 in 23S rRNA and position 2 of adenine 37 in tRNAs. This is Probable dual-specificity RNA methyltransferase RlmN from Streptococcus agalactiae serotype Ia (strain ATCC 27591 / A909 / CDC SS700).